The chain runs to 120 residues: NAD(P)H-quinone oxidoreductase subunit 3 (120 aa).

3 consecutive transmembrane segments (helical) span residues 1–21, 64–84, and 89–109; these read MFVL…SLVP, MFAL…PWAV, and LGLL…VALV.

Belongs to the complex I subunit 3 family. As to quaternary structure, NDH-1 can be composed of about 15 different subunits; different subcomplexes with different compositions have been identified which probably have different functions.

It is found in the cellular thylakoid membrane. The enzyme catalyses a plastoquinone + NADH + (n+1) H(+)(in) = a plastoquinol + NAD(+) + n H(+)(out). It catalyses the reaction a plastoquinone + NADPH + (n+1) H(+)(in) = a plastoquinol + NADP(+) + n H(+)(out). In terms of biological role, NDH-1 shuttles electrons from an unknown electron donor, via FMN and iron-sulfur (Fe-S) centers, to quinones in the respiratory and/or the photosynthetic chain. The immediate electron acceptor for the enzyme in this species is believed to be plastoquinone. Couples the redox reaction to proton translocation, and thus conserves the redox energy in a proton gradient. Cyanobacterial NDH-1 also plays a role in inorganic carbon-concentration. In Nostoc punctiforme (strain ATCC 29133 / PCC 73102), this protein is NAD(P)H-quinone oxidoreductase subunit 3.